Here is a 953-residue protein sequence, read N- to C-terminus: Coatomer subunit beta (953 aa).

An N-acetylthreonine modification is found at Thr-2. HEAT repeat units lie at residues 96 to 131 (HEMI…KEAE), 132 to 168 (LLEP…NFEN), 240 to 276 (SERA…SAPT), 277 to 314 (AIKA…HPAH), 316 to 353 (RVLQ…SRNV), and 396 to 433 (DMAA…RFDN). Lys-494 carries the post-translational modification N6-acetyllysine.

As to quaternary structure, oligomeric complex that consists of at least the alpha, beta, beta', gamma, delta, epsilon and zeta subunits. Interacts with SCYL1. Interacts with CAPN8. Interacts with COPG1. Interacts with ARF1 (myristoylated); this interaction is required for binding of COPB1 to Golgi membranes. Interacts (via trunk domain) with ARF1 (via switch I region); the interaction is direct. Interacts with KCNK2 (via N-terminus); this interaction increases the channel-mediated whole cell currents and promotes plasma membrane expression of KCNK2. Interacts with PRKCE. Interacts with STX17. Interacts with TMEM115. Interacts with TMEM41B. Post-translationally, proteolytically cleaved between Ser-528 and Ser-529 by CAPN8.

It is found in the cytoplasm. Its subcellular location is the golgi apparatus membrane. It localises to the cytoplasmic vesicle. The protein localises to the COPI-coated vesicle membrane. The protein resides in the cell membrane. It is found in the endoplasmic reticulum-Golgi intermediate compartment. Its subcellular location is the microsome membrane. The coatomer is a cytosolic protein complex that binds to dilysine motifs and reversibly associates with Golgi non-clathrin-coated vesicles, which further mediate biosynthetic protein transport from the ER, via the Golgi up to the trans Golgi network. Coatomer complex is required for budding from Golgi membranes, and is essential for the retrograde Golgi-to-ER transport of dilysine-tagged proteins. In mammals, the coatomer can only be recruited by membranes associated to ADP-ribosylation factors (ARFs), which are small GTP-binding proteins; the complex also influences the Golgi structural integrity, as well as the processing, activity, and endocytic recycling of LDL receptors. Involved in the Golgi disassembly and reassembly processes during cell cycle. Involved in autophagy by playing a role in early endosome function. Plays a role in organellar compartmentalization of secretory compartments including endoplasmic reticulum (ER)-Golgi intermediate compartment (ERGIC), Golgi, trans-Golgi network (TGN) and recycling endosomes, and in biosynthetic transport of CAV1. Plays a functional role in facilitating the transport of kappa-type opioid receptor mRNAs into axons and enhances translation of these proteins in the axonal compartment of dorsal root ganglion (DRG) cells. Required for limiting lipid storage in lipid droplets. Involved in lipid homeostasis by regulating the presence of perilipin family members PLIN2 and PLIN3 at the lipid droplet surface and promoting the association of adipocyte triglyceride lipase (PNPLA2) with the lipid droplet surface to mediate lipolysis. The protein is Coatomer subunit beta (Copb1) of Rattus norvegicus (Rat).